The chain runs to 98 residues: Cell division topological specificity factor (98 aa).

This sequence belongs to the MinE family.

In terms of biological role, prevents the cell division inhibition by proteins MinC and MinD at internal division sites while permitting inhibition at polar sites. This ensures cell division at the proper site by restricting the formation of a division septum at the midpoint of the long axis of the cell. In Moorella thermoacetica (strain ATCC 39073 / JCM 9320), this protein is Cell division topological specificity factor.